The following is a 131-amino-acid chain: MSAKRVFEKFDKNKDGKLSLDEFREVALAFSPYFTQEDIVKFFEEIDVDGNGELNADEFTSCIEKMLKEVFVFCDVDGDGKIPASESYVTMTSLGKKFTEETSAEKVRAADVDGDGYLNFDEFMALVIGDI.

4 EF-hand domains span residues 1 to 33 (MSAK…FSPY), 34 to 69 (FTQE…MLKE), 70 to 97 (VFVF…LGKK), and 98 to 131 (FTEE…IGDI). Ca(2+) contacts are provided by Asp11, Asn13, Asp15, Lys17, Glu22, Asp47, Asp49, Asn51, Glu53, and Glu58. Ca(2+) contacts are provided by Asp111, Asp113, Asp115, Tyr117, and Glu122.

Its function is as follows. Potential calcium sensor. The polypeptide is Probable calcium-binding protein CML34 (CML34) (Arabidopsis thaliana (Mouse-ear cress)).